The following is a 167-amino-acid chain: Ureidoglycolate lyase (167 aa).

This sequence belongs to the ureidoglycolate lyase family. As to quaternary structure, homodimer. Ni(2+) is required as a cofactor.

The enzyme catalyses (S)-ureidoglycolate = urea + glyoxylate. It functions in the pathway nitrogen metabolism; (S)-allantoin degradation. Its function is as follows. Catalyzes the catabolism of the allantoin degradation intermediate (S)-ureidoglycolate, generating urea and glyoxylate. Involved in the utilization of allantoin as nitrogen source. The chain is Ureidoglycolate lyase from Pseudomonas entomophila (strain L48).